The primary structure comprises 61 residues: Insect toxin BsIT1 (61 aa).

One can recognise an LCN-type CS-alpha/beta domain in the interval 1–61 (DGYILMRNGC…KHLNYHKKTC (61 aa)). Intrachain disulfides connect cysteine 10-cysteine 61, cysteine 14-cysteine 35, cysteine 21-cysteine 42, and cysteine 25-cysteine 44.

It belongs to the long (4 C-C) scorpion toxin superfamily. Sodium channel inhibitor family. Beta subfamily. In terms of tissue distribution, expressed by the venom gland.

The protein localises to the secreted. Its function is as follows. Depressant insect beta-toxins cause a transient contraction paralysis followed by a slow flaccid paralysis. They bind voltage-independently at site-4 of sodium channels (Nav) and shift the voltage of activation toward more negative potentials thereby affecting sodium channel activation and promoting spontaneous and repetitive firing. This toxin is active only on insects and causes a transient contraction paralysis followed by a slow flaccid paralysis. The polypeptide is Insect toxin BsIT1 (Hottentotta tamulus sindicus (Scorpion)).